The following is a 198-amino-acid chain: Ribonuclease HII (198 aa).

In terms of domain architecture, RNase H type-2 spans Glu11 to Glu198. Residues Asp17, Glu18, and Asp109 each contribute to the a divalent metal cation site.

Belongs to the RNase HII family. Requires Mn(2+) as cofactor. Mg(2+) serves as cofactor.

Its subcellular location is the cytoplasm. The catalysed reaction is Endonucleolytic cleavage to 5'-phosphomonoester.. In terms of biological role, endonuclease that specifically degrades the RNA of RNA-DNA hybrids. The protein is Ribonuclease HII of Mannheimia succiniciproducens (strain KCTC 0769BP / MBEL55E).